A 1438-amino-acid polypeptide reads, in one-letter code: DNA-directed RNA polymerase subunit beta' (1438 aa).

Positions 72, 74, 87, and 90 each coordinate Zn(2+). Residues Asp-483, Asp-485, and Asp-487 each contribute to the Mg(2+) site. The Zn(2+) site is built by Cys-831, Cys-905, Cys-912, and Cys-915.

This sequence belongs to the RNA polymerase beta' chain family. In terms of assembly, the RNAP catalytic core consists of 2 alpha, 1 beta, 1 beta' and 1 omega subunit. When a sigma factor is associated with the core the holoenzyme is formed, which can initiate transcription. Mg(2+) is required as a cofactor. Zn(2+) serves as cofactor.

It carries out the reaction RNA(n) + a ribonucleoside 5'-triphosphate = RNA(n+1) + diphosphate. Functionally, DNA-dependent RNA polymerase catalyzes the transcription of DNA into RNA using the four ribonucleoside triphosphates as substrates. This Flavobacterium psychrophilum (strain ATCC 49511 / DSM 21280 / CIP 103535 / JIP02/86) protein is DNA-directed RNA polymerase subunit beta'.